A 64-amino-acid chain; its full sequence is Conotoxin mr5.3 (64 aa).

Positions 1–19 are cleaved as a signal peptide; sequence MRCVPVFVILLLLIASVPS. Positions 20-48 are excised as a propeptide; the sequence is VDAQLKTKDDMPLASSHANVKRTLQILRN. 2 positions are modified to 4-carboxyglutamate: Glu-56 and Glu-60.

Contains 2 disulfide bonds that can be either 'C1-C3, C2-C4' or 'C1-C4, C2-C3', since these disulfide connectivities have been observed for conotoxins with cysteine framework V (for examples, see AC P0DQQ7 and AC P81755). Expressed by the venom duct.

It localises to the secreted. This Conus marmoreus (Marble cone) protein is Conotoxin mr5.3.